The primary structure comprises 652 residues: DNA ligase (652 aa).

Residues 29–33, 78–79, and glutamate 107 each bind NAD(+); these read DAEYD and SL. Residue lysine 109 is the N6-AMP-lysine intermediate of the active site. The NAD(+) site is built by arginine 130, glutamate 164, lysine 278, and lysine 302. Residues cysteine 395, cysteine 398, cysteine 413, and cysteine 418 each coordinate Zn(2+). Residues 577-652 form the BRCT domain; that stretch reads DENAALSGMT…IKDEAWLESL (76 aa).

It belongs to the NAD-dependent DNA ligase family. LigA subfamily. Mg(2+) is required as a cofactor. It depends on Mn(2+) as a cofactor.

The enzyme catalyses NAD(+) + (deoxyribonucleotide)n-3'-hydroxyl + 5'-phospho-(deoxyribonucleotide)m = (deoxyribonucleotide)n+m + AMP + beta-nicotinamide D-nucleotide.. Its function is as follows. DNA ligase that catalyzes the formation of phosphodiester linkages between 5'-phosphoryl and 3'-hydroxyl groups in double-stranded DNA using NAD as a coenzyme and as the energy source for the reaction. It is essential for DNA replication and repair of damaged DNA. In Streptococcus suis (strain 05ZYH33), this protein is DNA ligase.